A 322-amino-acid polypeptide reads, in one-letter code: MLYRIPVSTVGYWHSPWQIHQFLLPIERFIHRNPMLQLDPISKTTHQHSGHKGLVMAIGGAEDKVRGRQILTTFCQRAGGLDAVIGVIPSASREPDAMGRLYHDIFRDIGVREVDILLVGDRADAEQEEMLARLSRCTGIFMSGGDQLRLSALLDETPLLYQLRHQVWEGKSILGGTSAGAAVLGECMIASGGSNEAPNRSLVDLATGLGILPDVLVDQHFHNRNRLARLISAISAHPDKLGVGIDEDTCAMFEADGTLRVLGRGSVTIVDPRDVSYTNYAHVDVNEPLSIYNLRLHILSDGDCYNLRTHQVQHKCILPPLN.

Active-site charge relay system residues include serine 178, glutamate 196, and histidine 220.

It belongs to the peptidase S51 family.

It carries out the reaction [L-4-(L-arginin-2-N-yl)aspartate](n) + H2O = [L-4-(L-arginin-2-N-yl)aspartate](n-1) + L-4-(L-arginin-2-N-yl)aspartate. In terms of biological role, exopeptidase that catalyzes the hydrolytic cleavage of multi-L-arginyl-poly-L-aspartic acid (cyanophycin; a water-insoluble reserve polymer) into aspartate-arginine dipeptides. This Synechococcus elongatus protein is Cyanophycinase (cphB).